The sequence spans 202 residues: MADS-box transcription factor 33 (202 aa).

Residues 1 to 61 (MVRGKVQMRR…GKLHELATNG (61 aa)) form the MADS-box domain. The K-box domain maps to 87–177 (QQVAEQGIFL…QEKVKEQQKL (91 aa)).

Expressed in seedling roots.

It localises to the nucleus. Its function is as follows. Probable transcription factor. The protein is MADS-box transcription factor 33 (MADS33) of Oryza sativa subsp. japonica (Rice).